Here is a 105-residue protein sequence, read N- to C-terminus: Protein FAM24A (105 aa).

The N-terminal stretch at 1–32 is a signal peptide; sequence MAKMFDLRTKIMIGIGSSLLVAAMVLLSVVFC.

This sequence belongs to the FAM24 family.

It is found in the secreted. The chain is Protein FAM24A (FAM24A) from Homo sapiens (Human).